Reading from the N-terminus, the 197-residue chain is Na(+)-translocating NADH-quinone reductase subunit E (197 aa).

6 consecutive transmembrane segments (helical) span residues 11 to 31, 35 to 55, 76 to 96, 108 to 128, 139 to 159, and 175 to 195; these read SVFI…FLAV, VSTA…SVPA, FLKF…LEMF, LGIY…VSFM, VVYG…LAGI, and LGIT…FSGI.

The protein belongs to the NqrDE/RnfAE family. As to quaternary structure, composed of six subunits; NqrA, NqrB, NqrC, NqrD, NqrE and NqrF.

It is found in the cell inner membrane. It carries out the reaction a ubiquinone + n Na(+)(in) + NADH + H(+) = a ubiquinol + n Na(+)(out) + NAD(+). Its function is as follows. NQR complex catalyzes the reduction of ubiquinone-1 to ubiquinol by two successive reactions, coupled with the transport of Na(+) ions from the cytoplasm to the periplasm. NqrA to NqrE are probably involved in the second step, the conversion of ubisemiquinone to ubiquinol. This Neisseria gonorrhoeae (strain ATCC 700825 / FA 1090) protein is Na(+)-translocating NADH-quinone reductase subunit E.